Reading from the N-terminus, the 529-residue chain is MYFLILILVLLLIMVAAATAYVNLIDVHHEDVRPPLQMFDTGNVPLIEPPGEIVTEGNAHECHKALTPCDTHADCNACREGLANCQLFDEETMVQMRDADGNEQSATIRAGESYCFALDRERARSCNPGTGVWLLAQTETGFALLCSCLRPGLVTQLNMYEDCNVPVGCAPHGHVAGVGADARCVFDEGYVIDYDAATETPFCRPRTVRDVLFDEAFFPRAPCADGQVRLDHPGLNDYYRRYFRIEDICVVDPCSVDPISGRRTSGRLFYHAADGVEVSGCNCPAADGLLPVFNRHVADSGMVPRGDRTVANACLHPFNVHMLALRHVDYKFFWARPDHDEVADADVVFQADERQLSHERYRAMLYPLLRFHPEETSLVWGDSRVLKISVSYDTVLKNALLPPSLFQLFKRKERATSEPACFFPGEGRCIVHNSETCIRRHANGQVWTAETFTGSWCVLSRDGAAIKVWSRAERYPRGAAPAALRLRGFFFNNDRERNTVRVVNTGDMASGAQTDALTQVLDTFSNYSV.

The first 20 residues, 1–20, serve as a signal peptide directing secretion; sequence MYFLILILVLLLIMVAAATA.

This is an uncharacterized protein from Orgyia pseudotsugata multicapsid polyhedrosis virus (OpMNPV).